Consider the following 868-residue polypeptide: Ionotropic receptor 93a (868 aa).

An N-terminal signal peptide occupies residues 1–28 (MNPGEMRPSACLLLLAGLQLSILVPTEA). Topologically, residues 29-565 (NDFSSFLSAN…ITRKPDEVSR (537 aa)) are extracellular. Residues Asn-38, Asn-205, Asn-294, Asn-305, Asn-432, Asn-475, Asn-499, and Asn-543 are each glycosylated (N-linked (GlcNAc...) asparagine). The chain crosses the membrane as a helical span at residues 566-586 (IYLFTAPFTVETWFCLMGIIL). Residues 587–642 (LTAPTLYAINRLAPLKEMRIVGLSTVKSCFWYIFGALLQQGGMYLPTADSGRLVVG) are Cytoplasmic-facing. Residues 643-663 (FWWIVVIVLVTTYCGNLVAFL) traverse the membrane as a helical segment. The Extracellular segment spans residues 664–832 (TFPKFQPGVD…HKVNMDDMQG (169 aa)). N-linked (GlcNAc...) asparagine glycosylation occurs at Asn-691. Residues 833–853 (CFLVLLLGFTLALLIVCGEFW) traverse the membrane as a helical segment. Topologically, residues 854-868 (YRRFRASRKRRQFTN) are cytoplasmic.

The protein belongs to the glutamate-gated ion channel (TC 1.A.10.1) family. In the antenna, detected in sacculus neurons which innervate the first and second chambers (at protein level). Expressed in multiple cells of the larval dorsal organ ganglion, including the dorsal organ cool cells where it is predominately localized to the dendritic bulbs (at protein level).

Its subcellular location is the cell membrane. Its function is as follows. Integral part of various neural sensory systems in the antenna that provide the neural basis for the response to environmental changes in temperature (thermosensation) and humidity (hygrosensation). Together with Ir21a and Ir25a, mediates the response of the larval dorsal organ cool cells, a trio of cool-responsive neurons, to cooling and is required for cool avoidance behavior. Together with Ir25a and Ir40a, mediates the response of the hydrosensory sacculus neurons to changes in relative humidity, and is required for dry detection and humidiy preference behavior. The protein is Ionotropic receptor 93a of Drosophila melanogaster (Fruit fly).